Consider the following 339-residue polypeptide: uncharacterized protein (339 aa).

This is an uncharacterized protein from Treponema pallidum (strain Nichols).